The chain runs to 541 residues: Membrane protein insertase YidC (541 aa).

A helical transmembrane segment spans residues 7 to 27 (ILLLALALVSFLLFQQWQVET). Polar residues predominate over residues 34–55 (TVSTVQQTHKNGDVPTSSTANS). The segment at 34–59 (TVSTVQQTHKNGDVPTSSTANSDAPV) is disordered. 4 helical membrane passes run 343-363 (SFIQ…TFIV), 418-438 (LGGC…YWAL), 456-476 (LSAQ…MFLI), and 495-515 (FIPV…VLYW).

The protein belongs to the OXA1/ALB3/YidC family. Type 1 subfamily. As to quaternary structure, interacts with the Sec translocase complex via SecD. Specifically interacts with transmembrane segments of nascent integral membrane proteins during membrane integration.

The protein localises to the cell inner membrane. Required for the insertion and/or proper folding and/or complex formation of integral membrane proteins into the membrane. Involved in integration of membrane proteins that insert both dependently and independently of the Sec translocase complex, as well as at least some lipoproteins. Aids folding of multispanning membrane proteins. The sequence is that of Membrane protein insertase YidC from Aliivibrio salmonicida (strain LFI1238) (Vibrio salmonicida (strain LFI1238)).